A 477-amino-acid chain; its full sequence is Aspartyl/glutamyl-tRNA(Asn/Gln) amidotransferase subunit B (477 aa).

The protein belongs to the GatB/GatE family. GatB subfamily. As to quaternary structure, heterotrimer of A, B and C subunits.

The enzyme catalyses L-glutamyl-tRNA(Gln) + L-glutamine + ATP + H2O = L-glutaminyl-tRNA(Gln) + L-glutamate + ADP + phosphate + H(+). It carries out the reaction L-aspartyl-tRNA(Asn) + L-glutamine + ATP + H2O = L-asparaginyl-tRNA(Asn) + L-glutamate + ADP + phosphate + 2 H(+). Its function is as follows. Allows the formation of correctly charged Asn-tRNA(Asn) or Gln-tRNA(Gln) through the transamidation of misacylated Asp-tRNA(Asn) or Glu-tRNA(Gln) in organisms which lack either or both of asparaginyl-tRNA or glutaminyl-tRNA synthetases. The reaction takes place in the presence of glutamine and ATP through an activated phospho-Asp-tRNA(Asn) or phospho-Glu-tRNA(Gln). This is Aspartyl/glutamyl-tRNA(Asn/Gln) amidotransferase subunit B from Streptococcus sanguinis (strain SK36).